A 65-amino-acid chain; its full sequence is Large ribosomal subunit protein bL35 (65 aa).

It belongs to the bacterial ribosomal protein bL35 family.

The chain is Large ribosomal subunit protein bL35 from Methylobacillus flagellatus (strain ATCC 51484 / DSM 6875 / VKM B-1610 / KT).